The following is a 655-amino-acid chain: Macrolide export ATP-binding/permease protein MacB (655 aa).

An ABC transporter domain is found at 6–244 (IELRDVWREF…DALAGDEGPE (239 aa)). 42 to 49 (GASGSGKS) lines the ATP pocket. The tract at residues 225–252 (DQARPDAPPLDALAGDEGPEAPRPAPQP) is disordered. The next 4 helical transmembrane spans lie at 280-300 (LTMLGIIIGIAAVVSVVALGA), 527-547 (LTLLVSMIAVISLVVVGIGVM), 583-603 (VLVCLIGGVLGILLSLSIGVL), and 620-640 (SMVLAFVCSTLIGVAFGFLPA).

The protein belongs to the ABC transporter superfamily. Macrolide exporter (TC 3.A.1.122) family. Homodimer.

It is found in the cell inner membrane. Non-canonical ABC transporter that contains transmembrane domains (TMD), which form a pore in the inner membrane, and an ATP-binding domain (NBD), which is responsible for energy generation. Confers resistance against macrolides. This is Macrolide export ATP-binding/permease protein MacB from Bordetella avium (strain 197N).